We begin with the raw amino-acid sequence, 339 residues long: DNA-directed RNA polymerase subunit alpha (339 aa).

The segment at 1–233 (MVREEVAGST…DLFLPFLHAE (233 aa)) is alpha N-terminal domain (alpha-NTD). Residues 266-339 (GIPLNCIFID…IDLLKNKLSF (74 aa)) form an alpha C-terminal domain (alpha-CTD) region.

This sequence belongs to the RNA polymerase alpha chain family. In plastids the minimal PEP RNA polymerase catalytic core is composed of four subunits: alpha, beta, beta', and beta''. When a (nuclear-encoded) sigma factor is associated with the core the holoenzyme is formed, which can initiate transcription.

It localises to the plastid. The protein localises to the chloroplast. It carries out the reaction RNA(n) + a ribonucleoside 5'-triphosphate = RNA(n+1) + diphosphate. Its function is as follows. DNA-dependent RNA polymerase catalyzes the transcription of DNA into RNA using the four ribonucleoside triphosphates as substrates. In Aegilops speltoides (Goatgrass), this protein is DNA-directed RNA polymerase subunit alpha.